Reading from the N-terminus, the 254-residue chain is Bax inhibitor 1 homolog (254 aa).

The Cytoplasmic portion of the chain corresponds to 1–43; sequence MASTSNRNFFSSNMTQIPMDEKIRIALQFNNLSQSTKQTLTKV. Residues 44–64 traverse the membrane as a helical segment; it reads YCALAIGILTATVGVLFSMFI. The Lumenal portion of the chain corresponds to 65 to 66; it reads YR. A helical transmembrane segment spans residues 67-87; it reads PGFLMTLLLVIGSAILFATTP. The Cytoplasmic segment spans residues 88–98; it reads RTQDYKTQVKR. A helical membrane pass occupies residues 99–119; sequence FTLFNLVTFVTGMSSSGLIEL. Residues 120–126 lie on the Lumenal side of the membrane; that stretch reads YMDINSS. Residues 127-147 form a helical membrane-spanning segment; it reads IVLNAFMATCGIFISFTLFSL. The Cytoplasmic segment spans residues 148–152; sequence LTNKR. A helical transmembrane segment spans residues 153–173; sequence LYIFIGSSLASLSIGIFVLAL. The Lumenal segment spans residues 174–187; the sequence is TRLFGGYSEPLDQL. Residues 188-208 traverse the membrane as a helical segment; it reads FILAILASSVLFIIFDTQIMV. Residues 209–217 lie on the Cytoplasmic side of the membrane; that stretch reads HRIENLGEK. Positions 218–238 form an intramembrane region, helical; the sequence is DVLFHAFILFYDFVDLFRVIL. Residues 239–254 lie on the Cytoplasmic side of the membrane; sequence KILAKKENKNNNKSRR.

It belongs to the BI1 family.

The protein localises to the endoplasmic reticulum membrane. The chain is Bax inhibitor 1 homolog from Dictyostelium discoideum (Social amoeba).